Here is a 390-residue protein sequence, read N- to C-terminus: Dihydroorotase (390 aa).

Zn(2+)-binding residues include His-54 and His-56. Substrate is bound by residues 56 to 58 (HIR) and Asn-88. Zn(2+) is bound by residues Lys-136, His-160, His-197, and Asp-259. Lys-136 carries the N6-carboxylysine modification. Asp-259 is an active-site residue. Substrate-binding positions include His-263 and 277 to 278 (PG).

Belongs to the metallo-dependent hydrolases superfamily. DHOase family. Class I DHOase subfamily. Zn(2+) is required as a cofactor.

The catalysed reaction is (S)-dihydroorotate + H2O = N-carbamoyl-L-aspartate + H(+). The protein operates within pyrimidine metabolism; UMP biosynthesis via de novo pathway; (S)-dihydroorotate from bicarbonate: step 3/3. In terms of biological role, catalyzes the reversible cyclization of carbamoyl aspartate to dihydroorotate. This chain is Dihydroorotase, found in Saccharolobus solfataricus (strain ATCC 35092 / DSM 1617 / JCM 11322 / P2) (Sulfolobus solfataricus).